Here is a 508-residue protein sequence, read N- to C-terminus: Photosystem II CP47 reaction center protein (508 aa).

Transmembrane regions (helical) follow at residues 21 to 36 (SVHIMHTALVSGWAGS), 101 to 115 (IVFSGLCFLAAIWHW), 140 to 156 (GIHLFLAGVACFGFGAF), 203 to 218 (IAAGTLGILAGLFHLS), 237 to 252 (VLSSSIAAVFFAAFVV), and 457 to 472 (TFALLFFFGHIWHGAR).

Belongs to the PsbB/PsbC family. PsbB subfamily. In terms of assembly, PSII is composed of 1 copy each of membrane proteins PsbA, PsbB, PsbC, PsbD, PsbE, PsbF, PsbH, PsbI, PsbJ, PsbK, PsbL, PsbM, PsbT, PsbX, PsbY, PsbZ, Psb30/Ycf12, at least 3 peripheral proteins of the oxygen-evolving complex and a large number of cofactors. It forms dimeric complexes. Binds multiple chlorophylls. PSII binds additional chlorophylls, carotenoids and specific lipids. is required as a cofactor.

The protein localises to the plastid. Its subcellular location is the chloroplast thylakoid membrane. Functionally, one of the components of the core complex of photosystem II (PSII). It binds chlorophyll and helps catalyze the primary light-induced photochemical processes of PSII. PSII is a light-driven water:plastoquinone oxidoreductase, using light energy to abstract electrons from H(2)O, generating O(2) and a proton gradient subsequently used for ATP formation. In Zea mays (Maize), this protein is Photosystem II CP47 reaction center protein.